Reading from the N-terminus, the 1365-residue chain is Killer toxin-resistance protein 5 (1365 aa).

Positions 1–17 (MRLLALVLLLLCAPLRA) are cleaved as a signal peptide. N115, N228, N293, N457, N519, N523, N644, N870, N1091, N1150, and N1195 each carry an N-linked (GlcNAc...) asparagine glycan. Residues 1334-1365 (FASSPGDEDVPGESVSSKYQDSDNAAPLHDEL) are disordered. Over residues 1347-1356 (SVSSKYQDSD) the composition is skewed to polar residues. The Prevents secretion from ER signature appears at 1362 to 1365 (HDEL).

It to D.melanogaster UGGG.

It is found in the endoplasmic reticulum lumen. In terms of biological role, required for (1-&gt;6)-beta-D-glucan synthesis and normal cell growth. This is Killer toxin-resistance protein 5 (KRE5) from Saccharomyces cerevisiae (strain ATCC 204508 / S288c) (Baker's yeast).